A 3567-amino-acid polypeptide reads, in one-letter code: Erythronolide synthase EryA2 (3567 aa).

The Ketosynthase family 3 (KS3) 1 domain maps to S30–E455. 2 module regions span residues I33 to R1467 and I1491 to R3485. The active-site Acyl-thioester intermediate; for beta-ketoacyl synthase 1 activity is C202. Catalysis depends on for beta-ketoacyl synthase 1 activity residues H337 and H377. Residues V560–D880 form an acyltransferase 1 region. The active-site Acyl-ester intermediate; for acyltransferase 1 activity is S651. The tract at residues G1132–A1297 is C2-type beta-ketoacyl reductase 1. Residue Y1267 is the For C2-type beta-ketoacyl reductase 1 and probable racemase activity of the active site. A disordered region spans residues G1364 to L1385. Residues E1395–L1470 form the Carrier 1 domain. S1430 is subject to O-(pantetheine 4'-phosphoryl)serine. In terms of domain architecture, Ketosynthase family 3 (KS3) 2 spans S1488–E1912. C1661 serves as the catalytic Acyl-thioester intermediate; for beta-ketoacyl synthase 2 activity. Active-site for beta-ketoacyl synthase 2 activity residues include H1796 and H1834. The interval L2015–V2331 is acyltransferase 2. S2105 acts as the Acyl-ester intermediate; for acyltransferase 2 activity in catalysis. Positions H2377 to G2502 are N-terminal hotdog fold. The segment at H2377 to K2645 is dehydratase. In terms of domain architecture, PKS/mFAS DH spans H2377–Q2648. The active-site Proton acceptor; for dehydratase activity is the H2409. Residues A2514 to Q2648 form a C-terminal hotdog fold region. Residue D2571 is the Proton donor; for dehydratase activity of the active site. Positions G2831 to L3131 are enoyl reductase. Y2874 serves as the catalytic For enoyl reductase activity. NADP(+)-binding positions include H2964 to A2973, T3149 to L3152, S3173 to G3176, D3202 to T3203, K3250, and F3272 to S3273. Residues G3141 to A3317 form a beta-ketoacyl reductase 2 region. Y3287 acts as the For beta-ketoacyl reductase 2 activity in catalysis. Positions A3413–L3488 constitute a Carrier 2 domain. S3448 is modified (O-(pantetheine 4'-phosphoryl)serine).

In terms of assembly, homodimer. Erythronolide synthase is composed of EryAI, EryAII and EryAIII multimodular (2 modules) polypeptides each coding for a functional synthase subunit which participates in 2 of the six FAS-like elongation steps required for formation of the polyketide. Module 1, 2, 3, 4, 5, and 6 participating in biosynthesis steps 1, 2, 3, 4, 5, and 6, respectively. Requires pantetheine 4'-phosphate as cofactor.

It carries out the reaction 6 (S)-methylmalonyl-CoA + propanoyl-CoA + 6 NADPH + 12 H(+) = 6-deoxyerythronolide B + 6 CO2 + 6 NADP(+) + 7 CoA + H2O. It participates in antibiotic biosynthesis; erythromycin biosynthesis. Functionally, involved in the biosynthesis of antibiotic erythromycin via the biosynthesis of its aglycone precursor, 6-deoxyerythronolide B (6-dEB). This is Erythronolide synthase EryA2 from Saccharopolyspora erythraea (Streptomyces erythraeus).